The primary structure comprises 245 residues: 1-(5-phosphoribosyl)-5-[(5-phosphoribosylamino)methylideneamino] imidazole-4-carboxamide isomerase (245 aa).

Asp-7 acts as the Proton acceptor in catalysis. Asp-129 functions as the Proton donor in the catalytic mechanism.

It belongs to the HisA/HisF family.

It localises to the cytoplasm. The catalysed reaction is 1-(5-phospho-beta-D-ribosyl)-5-[(5-phospho-beta-D-ribosylamino)methylideneamino]imidazole-4-carboxamide = 5-[(5-phospho-1-deoxy-D-ribulos-1-ylimino)methylamino]-1-(5-phospho-beta-D-ribosyl)imidazole-4-carboxamide. It functions in the pathway amino-acid biosynthesis; L-histidine biosynthesis; L-histidine from 5-phospho-alpha-D-ribose 1-diphosphate: step 4/9. This is 1-(5-phosphoribosyl)-5-[(5-phosphoribosylamino)methylideneamino] imidazole-4-carboxamide isomerase from Shigella boydii serotype 4 (strain Sb227).